The chain runs to 105 residues: MSEDDSKKEPEPEETEAEIKHEEISREEDDEGGEFSTVTISDIEMLLKDTEIWDKLLRNELSIEEAKKMFDDVARSYSKADKKKRRVEKKPKKGKVTKKSDEEEE.

Composition is skewed to basic and acidic residues over residues 1–10 and 70–80; these read MSEDDSKKEP and FDDVARSYSKA. Disordered stretches follow at residues 1-35 and 70-105; these read MSED…GGEF and FDDV…EEEE. Residues 81 to 97 are compositionally biased toward basic residues; the sequence is DKKKRRVEKKPKKGKVT.

The protein belongs to the archaeal Rpo13 RNA polymerase subunit family. As to quaternary structure, part of the 13-subunit RNA polymerase.

The protein resides in the cytoplasm. The catalysed reaction is RNA(n) + a ribonucleoside 5'-triphosphate = RNA(n+1) + diphosphate. Functionally, DNA-dependent RNA polymerase catalyzes the transcription of DNA into RNA using the four ribonucleoside triphosphates as substrates. In vitro binds dsDNA but not ssDNA. The protein is DNA-directed RNA polymerase subunit Rpo13 of Sulfolobus acidocaldarius (strain ATCC 33909 / DSM 639 / JCM 8929 / NBRC 15157 / NCIMB 11770).